The following is a 311-amino-acid chain: Putative UPF0607 protein ENSP00000382826 (311 aa).

Over residues 48-61 the composition is skewed to basic and acidic residues; it reads AEEPKEATEVKDQV. Disordered stretches follow at residues 48 to 99, 186 to 229, and 291 to 311; these read AEEP…WYNP, GLLM…PLQL, and RKQL…GSCL. The segment covering 78-97 has biased composition (polar residues); it reads EAASTSRPLETQGNLTSSWY. 2 stretches are compositionally biased toward basic residues: residues 213–222 and 291–305; these read AGHRSRKRKL and RKQL…RQGR.

The protein belongs to the UPF0607 family.

This is Putative UPF0607 protein ENSP00000382826 from Homo sapiens (Human).